We begin with the raw amino-acid sequence, 783 residues long: Protein transport protein SEC23 B (783 aa).

The Zn(2+) site is built by Cys-59, Cys-62, Cys-81, and Cys-84. The zinc finger-like stretch occupies residues 59–84 (CRICTAALNPFARVDFLAKIWICPIC).

The protein belongs to the SEC23/SEC24 family. SEC23 subfamily. In terms of assembly, component of the coat protein complex II (COPII), composed of at least five proteins: the Sec23/24 complex, the Sec13/31 complex and Sar1. Interacts with SEC24A.

Its subcellular location is the cytoplasmic vesicle. It is found in the COPII-coated vesicle membrane. The protein resides in the endoplasmic reticulum membrane. It localises to the membrane. Its function is as follows. Component of the coat protein complex II (COPII) which promotes the formation of transport vesicles from the endoplasmic reticulum (ER). The coat has two main functions, the physical deformation of the endoplasmic reticulum membrane into vesicles and the selection of cargo molecules. In Arabidopsis thaliana (Mouse-ear cress), this protein is Protein transport protein SEC23 B.